The sequence spans 418 residues: Serpin H1 (418 aa).

An N-terminal signal peptide occupies residues 1 to 18 (MRALLLISTICLLARALA). Residue K94 is modified to N6-succinyllysine. 2 N-linked (GlcNAc...) asparagine glycosylation sites follow: N120 and N125. At S141 the chain carries Phosphoserine. An N6-acetyllysine modification is found at K207. K296 bears the N6-succinyllysine mark. K319 bears the N6-acetyllysine mark. The Prevents secretion from ER motif lies at 415–418 (RDEL).

Belongs to the serpin family.

It localises to the endoplasmic reticulum lumen. Binds specifically to collagen. Could be involved as a chaperone in the biosynthetic pathway of collagen. In Bos taurus (Bovine), this protein is Serpin H1 (SERPINH1).